A 204-amino-acid chain; its full sequence is Twist-related protein 1 (204 aa).

The segment covering 1–18 (MMQDVSSSPVSPADDSLS) has biased composition (low complexity). The segment at 1 to 107 (MMQDVSSSPV…GGGSPQSYEE (107 aa)) is disordered. The segment covering 34-43 (RGGRKRRSSR) has biased composition (basic residues). Gly residues-rich tracts occupy residues 46-65 (AGGG…GGDE) and 80-101 (GCGG…GGGS). In terms of domain architecture, bHLH spans 110-161 (TQRVMANVRERQRTQSLNEAFAALRKIIPTLPSDKLSKIQTLKLAARYIDFL). Residues 163–193 (QVLQSDELDSKMASCSYVAHERFSYAFSVWR) are sufficient for transactivation activity.

In terms of assembly, efficient DNA binding requires dimerization with another bHLH protein. Homodimer or heterodimer with E proteins such as TCF3. ID1 binds preferentially to TCF3 but does not interact efficiently with TWIST1 so ID1 levels control the amount of TCF3 available to dimerize with TWIST and thus determine the type of dimer formed.

Its subcellular location is the nucleus. Acts as a transcriptional regulator. Inhibits myogenesis by sequestrating E proteins, inhibiting trans-activation by MEF2, and inhibiting DNA-binding by MYOD1 through physical interaction. This interaction probably involves the basic domains of both proteins. Also represses expression of pro-inflammatory cytokines such as TNFA and IL1B. Regulates cranial suture patterning and fusion. Activates transcription as a heterodimer with E proteins. Regulates gene expression differentially, depending on dimer composition. Homodimers induce expression of FGFR2 and POSTN while heterodimers repress FGFR2 and POSTN expression and induce THBS1 expression. Heterodimerization is also required for osteoblast differentiation. Represses the activity of the circadian transcriptional activator: NPAS2-BMAL1 heterodimer. In Nomascus concolor (Black crested gibbon), this protein is Twist-related protein 1 (TWIST1).